We begin with the raw amino-acid sequence, 294 residues long: Acetylglutamate kinase (294 aa).

Residues 66–67 (GG), R88, and N193 each bind substrate.

This sequence belongs to the acetylglutamate kinase family. ArgB subfamily.

The protein resides in the cytoplasm. It carries out the reaction N-acetyl-L-glutamate + ATP = N-acetyl-L-glutamyl 5-phosphate + ADP. It participates in amino-acid biosynthesis; L-arginine biosynthesis; N(2)-acetyl-L-ornithine from L-glutamate: step 2/4. Functionally, catalyzes the ATP-dependent phosphorylation of N-acetyl-L-glutamate. This chain is Acetylglutamate kinase, found in Agrobacterium fabrum (strain C58 / ATCC 33970) (Agrobacterium tumefaciens (strain C58)).